The chain runs to 362 residues: Ribosomal RNA large subunit methyltransferase F (362 aa).

Over residues Met1–Gln28 the composition is skewed to basic residues. Residues Met1–Glu40 form a disordered region.

It belongs to the methyltransferase superfamily. METTL16/RlmF family.

It is found in the cytoplasm. It carries out the reaction adenosine(1618) in 23S rRNA + S-adenosyl-L-methionine = N(6)-methyladenosine(1618) in 23S rRNA + S-adenosyl-L-homocysteine + H(+). In terms of biological role, specifically methylates the adenine in position 1618 of 23S rRNA. The polypeptide is Ribosomal RNA large subunit methyltransferase F (Vibrio cholerae serotype O1 (strain M66-2)).